The primary structure comprises 421 residues: MFTRNMTIADYDPVLWQAIQDENRRQEEHIELIASENYASPRVMEAQGSQFTNKYAEGYPGKRYYGGCEYADIVEQLAIDRAKELFGADYVNVQPHSGSQANAAVYGALINAGDTILGMDLAHGGHLTHGAKVSFSGKIYNSVLYGITADGLIDYEDVRQKALECKPKLIVAGFSAYSQVVDWAKMREIADEVGAYLFVDMAHVAGLIAAGLYPNPLPHAHVVTTTTHKTLGGPRGGLILSSCGDEEIYKKLQSSVFPANQGGPLVHIIAAKAVCFKGALEPQYKEYQANVIKNAKAMVEVFKQRGYDVVSNGTENHLFLVSFIKQGLTGKAADAALGKANITVNKNAVPNDPQKPFVTSGIRVGTPSVTRRGFNENDVRELAGWMCDVLDALGKENEEQVIAETKEKVLAICKRLPVYPK.

Residues Leu121 and 125 to 127 (GHL) each bind (6S)-5,6,7,8-tetrahydrofolate. Lys229 is modified (N6-(pyridoxal phosphate)lysine).

The protein belongs to the SHMT family. Homodimer. The cofactor is pyridoxal 5'-phosphate.

It is found in the cytoplasm. It carries out the reaction (6R)-5,10-methylene-5,6,7,8-tetrahydrofolate + glycine + H2O = (6S)-5,6,7,8-tetrahydrofolate + L-serine. The protein operates within one-carbon metabolism; tetrahydrofolate interconversion. Its pathway is amino-acid biosynthesis; glycine biosynthesis; glycine from L-serine: step 1/1. Catalyzes the reversible interconversion of serine and glycine with tetrahydrofolate (THF) serving as the one-carbon carrier. This reaction serves as the major source of one-carbon groups required for the biosynthesis of purines, thymidylate, methionine, and other important biomolecules. Also exhibits THF-independent aldolase activity toward beta-hydroxyamino acids, producing glycine and aldehydes, via a retro-aldol mechanism. This is Serine hydroxymethyltransferase from Haemophilus influenzae (strain ATCC 51907 / DSM 11121 / KW20 / Rd).